Consider the following 172-residue polypeptide: C-phycocyanin beta subunit (172 aa).

Position 72 is an N4-methylasparagine (N72). (2R,3E)-phycocyanobilin-binding residues include C82 and C153.

Belongs to the phycobiliprotein family. Heterodimer of an alpha and a beta chain, which further assembles into trimers. The trimers assemble into hexamers, although these were not seen in the crystallographic studies. Part of 2 PBS rod complexes, the conventional CpcG-PBS rod and a photosystem I-specific CpcL-PBS rod, both of which include ferredoxin--NADP reductase (petH). Interacts with rod linker CpcC2 via the latter's N-terminal PBS-linker domain. In terms of processing, contains two covalently linked bilin chromophores.

It is found in the cellular thylakoid membrane. Light-harvesting photosynthetic bile pigment-protein from the phycobiliprotein complex (phycobilisome, PBS). Phycocyanin is the major phycobiliprotein in the PBS rod. This is C-phycocyanin beta subunit (cpcB) from Synechocystis sp. (strain ATCC 27184 / PCC 6803 / Kazusa).